A 460-amino-acid polypeptide reads, in one-letter code: Ribosome biogenesis protein YTM1 (460 aa).

Residues 8-89 (VKIRFFTREK…EASLNVEYTR (82 aa)) form a ubiquitin-like (UBL) domain region. The tract at residues 99-460 (SFSNEDWVSS…INKGDNIFKN (362 aa)) is sufficient for interaction with ERB1 and association with 66S pre-ribosomes. WD repeat units lie at residues 101 to 140 (SNEDWVSSLDVGDGSKHIISGSYDGIVRTWDLSGNVQKQY), 142 to 180 (GHSGPIRAVKYISNTRLVSAGNDRTLRLWKTKNDDLKLT), 206 to 244 (GHKAPVVSIDVSDNSRILSASYDNSIGFWSTIYKEMTVV), 285 to 325 (SHTA…CIDT), 327 to 366 (TTSYSLLSIAQLSTLNLLACGSSARHITLHDPRVGASSKV), 373 to 413 (GHKN…PMYT), and 424 to 460 (GVNDKVFAVKWAEKVGIISAGQDKKIQINKGDNIFKN).

Belongs to the WD repeat WDR12/YTM1 family. As to quaternary structure, component of the NOP7 complex, composed of ERB1, NOP7 and YTM1. The complex is held together by ERB1, which interacts with NOP7 via its N-terminal domain and with YTM1 via a high-affinity interaction between the seven-bladed beta-propeller domains of the 2 proteins. The NOP7 complex associates with the 66S pre-ribosome. Interacts (via UBL domain) with MDN1 (via VWFA/MIDAS domain).

The protein localises to the nucleus. Its subcellular location is the nucleolus. It is found in the nucleoplasm. Functionally, component of the NOP7 complex, which is required for maturation of the 25S and 5.8S ribosomal RNAs and formation of the 60S ribosome. This Saccharomyces cerevisiae (strain YJM789) (Baker's yeast) protein is Ribosome biogenesis protein YTM1.